The following is a 188-amino-acid chain: MLGNFRFDDMVEKLSRRVAGQTSRRSVIGKLGTAMLGIGLVPLLPVDRRGRVSRANAADAPAGTDPRAKWVPQDNDIQACDYWRHCSIDGNICDCSGGSLTNCPPGTKLATASWVASCYNPTDGQSYLIAYRDCCGYNVSGRCPCLNTEGELPVYRPEFANDIIWCFGAEDDAMTYHCTISPIVGKAS.

The tat-type signal signal peptide spans 1 to 57; it reads MLGNFRFDDMVEKLSRRVAGQTSRRSVIGKLGTAMLGIGLVPLLPVDRRGRVSRANA. 6 cysteine pairs are disulfide-bonded: C80–C145, C86–C118, C93–C178, C95–C143, C103–C134, and C135–C166. W114 is subject to Tryptophylquinone. The segment at residues 114-165 is a cross-link (tryptophan tryptophylquinone (Trp-Trp)); that stretch reads WVASCYNPTDGQSYLIAYRDCCGYNVSGRCPCLNTEGELPVYRPEFANDIIW.

Belongs to the aromatic amine dehydrogenase light chain family. As to quaternary structure, heterotetramer of two light and two heavy chains. The cofactor is tryptophan tryptophylquinone residue. Predicted to be exported by the Tat system. The position of the signal peptide cleavage has not been experimentally proven. In terms of processing, tryptophan tryptophylquinone (TTQ) is formed by oxidation of the indole ring of a tryptophan to form tryptophylquinone followed by covalent cross-linking with another tryptophan residue.

The protein resides in the periplasm. The enzyme catalyses 2 oxidized [amicyanin] + methylamine + H2O = 2 reduced [amicyanin] + formaldehyde + NH4(+) + 2 H(+). The protein operates within one-carbon metabolism; methylamine degradation; formaldehyde from methylamine: step 1/1. Functionally, methylamine dehydrogenase carries out the oxidation of methylamine. Electrons are passed from methylamine dehydrogenase to amicyanin. This chain is Methylamine dehydrogenase light chain (mauA), found in Paracoccus denitrificans.